A 694-amino-acid polypeptide reads, in one-letter code: Nuclear factor erythroid 2-related factor 3 (694 aa).

Residues 133-150 (ASSTGGAGASVDGGSQAV) show a composition bias toward low complexity. 2 disordered regions span residues 133 to 256 (ASST…LNGT) and 330 to 357 (DPTA…QTLP). Basic and acidic residues-rich tracts occupy residues 193 to 217 (GVLR…RVSA) and 231 to 254 (NKIA…RHLN). Residues 333–357 (ARTSQSQEPFLQLNSHTTNPEQTLP) are compositionally biased toward polar residues. The region spanning 578–641 (LIRDIRRRGK…NIMKQKLHDL (64 aa)) is the bZIP domain. Positions 580 to 599 (RDIRRRGKNKVAAQNCRKRK) are basic motif. Residues 606-620 (LEDDVCNLQAKKETL) form a leucine-zipper region.

The protein belongs to the bZIP family. CNC subfamily. In terms of assembly, heterodimer with MAFG, MAFK and other small MAF proteins that binds to the MAF recognition elements (MARE). Highly expressed in human placenta and also in B-cell and monocyte cell lines. Low expression in heart, brain, lung, skeletal muscle, kidney and pancreas.

It is found in the nucleus. Activates erythroid-specific, globin gene expression. This is Nuclear factor erythroid 2-related factor 3 (NFE2L3) from Homo sapiens (Human).